Reading from the N-terminus, the 919-residue chain is Translocase of chloroplast 101, chloroplastic (919 aa).

Disordered regions lie at residues 20-47 and 64-211; these read SASRSLSEEVGVDPALVSEGAPEGVIEG and VDDE…NETR. Positions 73–88 are enriched in basic and acidic residues; it reads SENKAVVETEKVESKP. Acidic residues predominate over residues 96 to 128; that stretch reads FAEEDGDSDADAEDEDDEDDEDDDEDDDDEDDK. Residues 182–207 are compositionally biased toward polar residues; sequence QRPNGAPSTQLTATTEENANSDTAEG. The AIG1-type G domain occupies 284–513; sequence DFACTILVLG…KLQETATPGR (230 aa). The tract at residues 293 to 300 is G1; that stretch reads GKTGVGKS. Position 296–301 (296–301) interacts with GTP; sequence GVGKSA. Serine 300 contacts Mg(2+). The tract at residues 319–323 is G2; sequence PSTNK. Residues 340-343 are G3; sequence DTPG. The segment at 412-415 is G4; that stretch reads THAS. Residues histidine 413 and 461–462 each bind GTP; that span reads EN. A G5 region spans residues 461–463; that stretch reads ENH. 2 disordered regions span residues 540–585 and 611–650; these read LPDE…LTKE and RRRKEMKKRQAQMSKEELAQPDEADDEAGQPAAVPVPMPD. The segment covering 543–567 has biased composition (acidic residues); that stretch reads EQLDESDESDDDEEEEDSEADDYDE. Basic and acidic residues predominate over residues 574 to 585; the sequence is LSKEELEELTKE. Residues 629-638 show a composition bias toward acidic residues; sequence AQPDEADDEA. Positions 641-650 are enriched in low complexity; it reads PAAVPVPMPD. A helical transmembrane segment spans residues 893–914; that stretch reads MVLIGIVPILRSLINCRFGFGG.

The protein belongs to the TRAFAC class TrmE-Era-EngA-EngB-Septin-like GTPase superfamily. AIG1/Toc34/Toc159-like paraseptin GTPase family. TOC159 subfamily. As to quaternary structure, part of the TOC core complex. The cofactor is Mg(2+).

The protein localises to the plastid. It localises to the chloroplast outer membrane. GTPase involved in protein precursor import into chloroplasts. Seems to recognize chloroplast-destined precursor proteins and regulate their presentation to the translocation channel through GTP hydrolysis. Probably specialized in the import of nuclear encoded non-photosynthetic preproteins from the cytoplasm to the chloroplast. This chain is Translocase of chloroplast 101, chloroplastic, found in Physcomitrium patens (Spreading-leaved earth moss).